The following is a 242-amino-acid chain: Probable transcriptional regulatory protein EUBREC_1961 (242 aa).

This sequence belongs to the TACO1 family.

The protein resides in the cytoplasm. The sequence is that of Probable transcriptional regulatory protein EUBREC_1961 from Agathobacter rectalis (strain ATCC 33656 / DSM 3377 / JCM 17463 / KCTC 5835 / VPI 0990) (Eubacterium rectale).